The sequence spans 256 residues: Type II phosphatidylinositol 4,5-bisphosphate 4-phosphatase (256 aa).

Positions 1–10 (MAADGIDERS) are enriched in basic and acidic residues. A disordered region spans residues 1–25 (MAADGIDERSPLISPSSGNVTPTAP). A compositionally biased stretch (polar residues) spans 13 to 22 (ISPSSGNVTP). Residue Cys106 is part of the active site. The CX5R motif motif lies at 106–112 (CKDISRR). The next 2 membrane-spanning stretches (helical) occupy residues 191–211 (CCTY…LTVG) and 226–246 (WAVA…WGAI).

Its subcellular location is the late endosome membrane. The protein resides in the lysosome membrane. It catalyses the reaction a 1,2-diacyl-sn-glycero-3-phospho-(1D-myo-inositol-4,5-bisphosphate) + H2O = a 1,2-diacyl-sn-glycero-3-phospho-(1D-myo-inositol-5-phosphate) + phosphate. In terms of biological role, catalyzes the hydrolysis of phosphatidylinositol-4,5-bisphosphate (PtdIns-4,5-P2) to phosphatidylinositol-4-phosphate (PtdIns-4-P). The sequence is that of Type II phosphatidylinositol 4,5-bisphosphate 4-phosphatase from Xenopus laevis (African clawed frog).